The primary structure comprises 332 residues: Large ribosomal subunit protein mL44 (332 aa).

The N-terminal 30 residues, 1-30 (MASGLTRLLLRGPRCLLATAGLTLIPPVRG), are a transit peptide targeting the mitochondrion. The RNase III domain occupies 86–228 (DLLKTAFVNS…LITQMTGKEL (143 aa)). The region spanning 236–306 (NPMGLLVQEL…ARVALRKLYG (71 aa)) is the DRBM domain.

It belongs to the ribonuclease III family. Mitochondrion-specific ribosomal protein mL44 subfamily. As to quaternary structure, component of the mitochondrial ribosome large subunit (39S) which comprises a 16S rRNA and about 50 distinct proteins.

Its subcellular location is the mitochondrion. Its function is as follows. Component of the 39S subunit of mitochondrial ribosome. May have a function in the assembly/stability of nascent mitochondrial polypeptides exiting the ribosome. The protein is Large ribosomal subunit protein mL44 (MRPL44) of Bos taurus (Bovine).